A 320-amino-acid chain; its full sequence is Solute carrier family 35 member B1 (320 aa).

A run of 8 helical transmembrane segments spans residues 9 to 29 (GLRLLVCFLGVFVCYFYYGIL), 49 to 69 (FALSLVFVQCIVNALFAKLLI), 81 to 103 (QSWLYSACSLSYLGAMVSSNSAL), 134 to 154 (YPLTKYLCVLLIVFGVALFMY), 166 to 186 (TVGYGELLLLLSLTLDGLTGV), 202 to 222 (MMLSINLWSSLFLGAGIVLTG), 241 to 261 (IVLFSLTSALGQTFIFMTVVY), and 283 to 303 (VILFSNPISSIQWVGTLLVFL). A Di-lysine motif motif is present at residues 316-320 (KKPSH).

It belongs to the nucleotide-sugar transporter family. SLC35B subfamily.

The protein resides in the endoplasmic reticulum membrane. In terms of biological role, probable sugar transporter. The chain is Solute carrier family 35 member B1 (slc35b1) from Xenopus laevis (African clawed frog).